A 624-amino-acid chain; its full sequence is Protein NRT1/ PTR FAMILY 6.1 (624 aa).

The disordered stretch occupies residues 1–20 (MVASEIKSPVSVPETPGSSS). 2 consecutive transmembrane segments (helical) span residues 83–100 (MAYF…FYVM) and 114–134 (FLGI…AYLG). Thr138 is subject to Phosphothreonine. Helical transmembrane passes span 139–159 (IAIF…GASL), 184–204 (SWQM…AAGI), 230–250 (FFNF…TLVV), 258–278 (WGMA…LFFA), 378–398 (LIPI…YLTL), 422–442 (VFPG…FVPI), 459–479 (VGIG…FENY), 504–524 (WLLI…VGLL), 537–557 (SIGS…ATIL), and 585–605 (CLYW…LWSA).

It belongs to the major facilitator superfamily. Proton-dependent oligopeptide transporter (POT/PTR) (TC 2.A.17) family. As to expression, expressed in flower and siliques.

The protein resides in the membrane. This is Protein NRT1/ PTR FAMILY 6.1 (NPF6.1) from Arabidopsis thaliana (Mouse-ear cress).